The sequence spans 342 residues: Cytochrome f (342 aa).

Positions 1 to 28 (MKKQWIAGAFGLTAALAGLVSVPQSALA) are cleaved as a signal peptide. Cys-48, Cys-51, and His-52 together coordinate heme. The chain crosses the membrane as a helical span at residues 305–325 (VTWLVAFLAAAFICQLLLVLK).

Belongs to the cytochrome f family. As to quaternary structure, the 4 large subunits of the cytochrome b6-f complex are cytochrome b6, subunit IV (17 kDa polypeptide, PetD), cytochrome f and the Rieske protein, while the 4 small subunits are PetG, PetL, PetM and PetN. The complex functions as a dimer. The cofactor is heme.

It is found in the cell inner membrane. In terms of biological role, component of the cytochrome b6-f complex, which mediates electron transfer between photosystem II (PSII) and photosystem I (PSI), cyclic electron flow around PSI, and state transitions. The chain is Cytochrome f (petA) from Gloeobacter violaceus (strain ATCC 29082 / PCC 7421).